We begin with the raw amino-acid sequence, 662 residues long: MEALGARGALAGFLRALCVLGCLLGRATAPPSPVIKFPGDVAPKTDKELAVQYLNTFYGCPKDSCNLFVLKDTLKKMQKFFGLPQTGELDQSTIETMRKPRCGNPDVANYNFFPRKPKWDKNQITYRIIGYTPDLDPETVDDAFARAFQVWSNVTPLRFSRIHDGEADIMINFGRWEHGDGYPFDGKDGLLAHAFAPGTGVGGDSHFDDDELWTLGEGQVVRVKYGNADGEYCKFPFLFNGKEYTSCTDTGRSDGFLWCSTTYNFEKDGKYGFCPHEALFTMGGNADGQPCKFPFRFQGTSYSSCTTEGRTDGYRWCGTTEDYDRDKKYGFCPETAMSTIGGNSEGAPCVFPFTFLGNKYESCTSAGRSDGKMWCATSTNYDDDRKWGFCPDQGYSLFLVAAHEFGHAMGLEHSQDPGALMAPIYTYTKNFRLSQDDIKGIQELYGASPDAGTDAGTGPTPTLGPVTPEICTQDIVFDGIAQIRGEIFFFKDRFIWRTVTPGDKPMGPLLVATFWPELPEKIDAVYEAPQEEKAVFFAGNEYWVYSASTLERGYPKPLTSLGLPPDVQRVDAAFNWSKNKKTYIFAGDKFWRYNEVKKKMDPGFPRLIADAWNAIPDHLDAVVDLQGSGHSYFFKGTYYLKLENQSLKSVKVGSIKTDWLGC.

A signal peptide spans 1–29; that stretch reads MEALGARGALAGFLRALCVLGCLLGRATA. The propeptide at 30–109 is activation peptide; it reads PPSPVIKFPG…PRCGNPDVAN (80 aa). A Cysteine switch motif is present at residues 100–107; it reads PRCGNPDV. Residue Cys102 participates in Zn(2+) binding. The interval 110-221 is collagenase-like 1; that stretch reads YNFFPRKPKW…LWTLGEGQVV (112 aa). The Ca(2+) site is built by Asp134 and Asp168. Zn(2+) is bound by residues His178 and Asp180. The Ca(2+) site is built by Asp185 and Gly186. His193 provides a ligand contact to Zn(2+). Gly200, Gly202, and Asp204 together coordinate Ca(2+). His206 contributes to the Zn(2+) binding site. Ca(2+) is bound by residues Asp208, Asp209, and Glu211. Residues 222 to 396 are collagen-binding; it reads RVKYGNADGE…WGFCPDQGYS (175 aa). Fibronectin type-II domains are found at residues 228–276, 286–334, and 344–392; these read ADGE…FCPH, ADGQ…FCPE, and SEGA…FCPD. 6 cysteine pairs are disulfide-bonded: Cys233-Cys259, Cys247-Cys274, Cys291-Cys317, Cys305-Cys332, Cys349-Cys375, and Cys363-Cys390. The interval 397 to 467 is collagenase-like 2; the sequence is LFLVAAHEFG…GPTPTLGPVT (71 aa). His403 lines the Zn(2+) pocket. Residue Glu404 is part of the active site. His407 and His413 together coordinate Zn(2+). The segment at 414–662 is required for inhibitor TIMP2 binding; that stretch reads SQDPGALMAP…GSIKTDWLGC (249 aa). Cysteines 471 and 662 form a disulfide. 4 Hemopexin repeats span residues 474–518, 519–565, 567–615, and 616–662; these read DIVF…WPEL, PEKI…GLPP, VQRV…WNAI, and PDHL…WLGC. Positions 478, 523, and 571 each coordinate Ca(2+). A glycan (N-linked (GlcNAc...) asparagine) is linked at Asn575. Asp620 is a binding site for Ca(2+). Residue Asn644 is glycosylated (N-linked (GlcNAc...) asparagine).

Belongs to the peptidase M10A family. Interacts (via the C-terminal hemopexin-like domains-containing region) with the integrin alpha-V/beta-3; the interaction promotes vascular invasion in angiogenic vessels and melamoma cells. Interacts (via the C-terminal PEX domain) with TIMP2 (via the C-terminal); the interaction inhibits the degradation activity. Interacts with GSK3B. Requires Ca(2+) as cofactor. The cofactor is Zn(2+). Post-translationally, phosphorylation on multiple sites modulates enzymatic activity. Phosphorylated by PKC in vitro. In terms of processing, the propeptide is processed by MMP14 (MT-MMP1) and MMP16 (MT-MMP3). Autocatalytic cleavage in the C-terminal produces the anti-angiogenic peptide, PEX. This processing appears to be facilitated by binding integrinv/beta3.

It is found in the secreted. The protein localises to the extracellular space. The protein resides in the extracellular matrix. It localises to the membrane. Its subcellular location is the nucleus. The enzyme catalyses Cleavage of gelatin type I and collagen types IV, V, VII, X. Cleaves the collagen-like sequence Pro-Gln-Gly-|-Ile-Ala-Gly-Gln.. Ubiquitinous metalloproteinase that is involved in diverse functions such as remodeling of the vasculature, angiogenesis, tissue repair, tumor invasion, inflammation, and atherosclerotic plaque rupture. As well as degrading extracellular matrix proteins, can also act on several nonmatrix proteins such as big endothelial 1 and beta-type CGRP promoting vasoconstriction. Also cleaves KISS at a Gly-|-Leu bond. Appears to have a role in myocardial cell death pathways. Contributes to myocardial oxidative stress by regulating the activity of GSK3beta. Cleaves GSK3beta in vitro. Involved in the formation of the fibrovascular tissues. In terms of biological role, PEX, the C-terminal non-catalytic fragment of MMP2, possesses anti-angiogenic and anti-tumor properties and inhibits cell migration and cell adhesion to FGF2 and vitronectin. Ligand for integrin alpha-v/beta-3 on the surface of blood vessels. This chain is 72 kDa type IV collagenase (MMP2), found in Oryctolagus cuniculus (Rabbit).